The chain runs to 837 residues: Outer membrane usher protein PsaC (837 aa).

The N-terminal stretch at 1–23 is a signal peptide; sequence MKKLIVQFTTITLLMSTSFLVGA.

The protein belongs to the fimbrial export usher family.

The protein resides in the cell outer membrane. In terms of biological role, involved in the export and assembly of PsaA (pH 6) fimbrial subunits across the outer membrane. This chain is Outer membrane usher protein PsaC (psaC), found in Yersinia pestis.